Reading from the N-terminus, the 380-residue chain is Chorismate synthase (380 aa).

Arginine 48 provides a ligand contact to NADP(+). Residues 126–128 (HFS), glycine 300, 315–319 (KPISS), and arginine 342 each bind FMN.

It belongs to the chorismate synthase family. As to quaternary structure, homotetramer. FMNH2 serves as cofactor.

It catalyses the reaction 5-O-(1-carboxyvinyl)-3-phosphoshikimate = chorismate + phosphate. Its pathway is metabolic intermediate biosynthesis; chorismate biosynthesis; chorismate from D-erythrose 4-phosphate and phosphoenolpyruvate: step 7/7. In terms of biological role, catalyzes the anti-1,4-elimination of the C-3 phosphate and the C-6 proR hydrogen from 5-enolpyruvylshikimate-3-phosphate (EPSP) to yield chorismate, which is the branch point compound that serves as the starting substrate for the three terminal pathways of aromatic amino acid biosynthesis. This reaction introduces a second double bond into the aromatic ring system. In Lancefieldella parvula (strain ATCC 33793 / DSM 20469 / CCUG 32760 / JCM 10300 / KCTC 3663 / VPI 0546 / 1246) (Atopobium parvulum), this protein is Chorismate synthase.